We begin with the raw amino-acid sequence, 173 residues long: Putative metal-dependent hydrolase BA_2700/GBAA_2700/BAS2515 (173 aa).

Positions 65, 156, and 160 each coordinate Zn(2+).

The protein belongs to the metal hydrolase YfiT family. As to quaternary structure, homodimer. Zn(2+) is required as a cofactor.

It localises to the cytoplasm. Its function is as follows. Possible metal-dependent hydrolase. This is Putative metal-dependent hydrolase BA_2700/GBAA_2700/BAS2515 from Bacillus anthracis.